Consider the following 310-residue polypeptide: Protoheme IX farnesyltransferase (310 aa).

The next 9 membrane-spanning stretches (helical) occupy residues 21-43 (LLKPRVMSLVVFTALVGLLVAPV), 48-70 (MIALTGILFIALGAGASGALNMW), 95-115 (GEALGIGLALSGIAVVMLGLA), 118-138 (LFAAGLLAFTIFFYAVVYSMW), 147-167 (IVIGGAAGAFPPMIGWAVATG), 174-194 (LFMFALIFMWTPPHFWSLALF), 220-240 (VLVYSLLLAPLAVAGAFTGIG), 243-263 (LYLATALALNGWLLVGAVRIW), and 289-309 (LFLHFGAILAEAALKPYGLGG).

It belongs to the UbiA prenyltransferase family. Protoheme IX farnesyltransferase subfamily. As to quaternary structure, interacts with CtaA.

It localises to the cell inner membrane. The catalysed reaction is heme b + (2E,6E)-farnesyl diphosphate + H2O = Fe(II)-heme o + diphosphate. The protein operates within porphyrin-containing compound metabolism; heme O biosynthesis; heme O from protoheme: step 1/1. In terms of biological role, converts heme B (protoheme IX) to heme O by substitution of the vinyl group on carbon 2 of heme B porphyrin ring with a hydroxyethyl farnesyl side group. The chain is Protoheme IX farnesyltransferase from Cereibacter sphaeroides (strain KD131 / KCTC 12085) (Rhodobacter sphaeroides).